The following is a 480-amino-acid chain: Acyl-coenzyme A synthetase ACSM6, mitochondrial (480 aa).

The transit peptide at 1–21 directs the protein to the mitochondrion; the sequence is MLGRFQPFSLVRSFRLGFEAC. ATP-binding positions include 226-234, 366-371, Asp453, and Arg468; these read TKGTTGAPK and EGYGQT.

The protein belongs to the ATP-dependent AMP-binding enzyme family. As to quaternary structure, monomer. The cofactor is Mg(2+). Mn(2+) serves as cofactor.

The protein resides in the mitochondrion. The catalysed reaction is a medium-chain fatty acid + ATP + CoA = a medium-chain fatty acyl-CoA + AMP + diphosphate. Functionally, catalyzes the activation of fatty acids by CoA to produce an acyl-CoA, the first step in fatty acid metabolism. The polypeptide is Acyl-coenzyme A synthetase ACSM6, mitochondrial (ACSM6) (Homo sapiens (Human)).